Here is a 153-residue protein sequence, read N- to C-terminus: MKCPFCNNISTNVKDSRSIEDDMLIRRRRVCPVCNSRFTTTEKLLLRSLMVIKKNGGLEQFDKKKLLSSILIATKKRPVSHDKINMMVNNIFYELEGKKDNAIPTDVIGKMVMDNLFKLDKVAYVRFASVYMNFKNINDFSNIIAKIINENNL.

A zinc finger spans residues 3–34; the sequence is CPFCNNISTNVKDSRSIEDDMLIRRRRVCPVC. The region spanning 49–139 is the ATP-cone domain; it reads LMVIKKNGGL…VYMNFKNIND (91 aa).

It belongs to the NrdR family. The cofactor is Zn(2+).

Functionally, negatively regulates transcription of bacterial ribonucleotide reductase nrd genes and operons by binding to NrdR-boxes. The chain is Transcriptional repressor NrdR from Ehrlichia ruminantium (strain Gardel).